The sequence spans 157 residues: Transcription antitermination protein NusB (157 aa).

This sequence belongs to the NusB family.

Involved in transcription antitermination. Required for transcription of ribosomal RNA (rRNA) genes. Binds specifically to the boxA antiterminator sequence of the ribosomal RNA (rrn) operons. The sequence is that of Transcription antitermination protein NusB from Xylella fastidiosa (strain 9a5c).